A 73-amino-acid chain; its full sequence is Heterin-2 (73 aa).

A signal peptide spans 1 to 22 (MQYKTFLVIFLAYLLVTEEALA). Residues 47-73 (KRALKNIFDPYQKNLDLELERLLSQLQ) constitute a propeptide that is removed on maturation.

It belongs to the non-disulfide-bridged peptide (NDBP) superfamily. Medium-length antimicrobial peptide (group 3) family. As to expression, expressed by the venom gland.

The protein localises to the secreted. The protein resides in the target cell membrane. In terms of biological role, amphipathic peptide with potent activities against Gram-positive bacteria (MIC=5.6-30.0 uM) and weaker activities against the tested Gram-negative bacteria (MIC=15 uM to &gt;45 uM). It has high hemolytic activity against human erythrocytes. May act by disrupting the integrity of the bacterial cell membrane. The chain is Heterin-2 from Heterometrus spinifer (Asia giant forest scorpion).